A 389-amino-acid chain; its full sequence is Chalcone synthase E (389 aa).

Residue Cys164 is part of the active site.

This sequence belongs to the thiolase-like superfamily. Chalcone/stilbene synthases family.

The enzyme catalyses (E)-4-coumaroyl-CoA + 3 malonyl-CoA + 3 H(+) = 2',4,4',6'-tetrahydroxychalcone + 3 CO2 + 4 CoA. It functions in the pathway secondary metabolite biosynthesis; flavonoid biosynthesis. Functionally, the primary product of this enzyme is 4,2',4',6'-tetrahydroxychalcone (also termed naringenin-chalcone or chalcone) which can under specific conditions spontaneously isomerize into naringenin. The chain is Chalcone synthase E (CHSE) from Ipomoea purpurea (Common morning glory).